Here is a 319-residue protein sequence, read N- to C-terminus: Chromoplast-specific carotenoid-associated protein C2, chromoplastic (319 aa).

The transit peptide at 1–55 (MTSIAFCNAFTVNPFLAAARRSPPPLTPLTSVALSPARKPRILAIFHPRTFPSFR) directs the protein to the chromoplast.

It belongs to the PAP/fibrillin family.

The protein resides in the plastid. Its subcellular location is the chromoplast. Functionally, may be involved in carotenoid sequestration within chromoplasts. The sequence is that of Chromoplast-specific carotenoid-associated protein C2, chromoplastic (CHRC2) from Oncidium hybrid cultivar (Orchid).